A 78-amino-acid polypeptide reads, in one-letter code: FXYD domain-containing ion transport regulator 7 (78 aa).

Topologically, residues 1–22 (MATQVPTKVPQDPDPFYYDYDT) are extracellular. O-linked (GlcNAc) threonine glycosylation is found at Thr3 and Thr7. Residues 23–43 (VQTVGMTLATILFLLGILIIL) traverse the membrane as a helical segment. The Cytoplasmic segment spans residues 44–78 (SKKVKCRKADSRSESPTCKSCKSELPSSAPGGGGV). The interval 52-78 (ADSRSESPTCKSCKSELPSSAPGGGGV) is disordered. Ser71 is modified (phosphoserine).

It belongs to the FXYD family. In terms of assembly, regulatory subunit of the sodium/potassium-transporting ATPase which is composed of a catalytic alpha subunit, a non-catalytic beta subunit and an additional regulatory subunit. The regulatory subunit, a member of the FXYD protein family, modulates the enzymatic activity in a tissue- and isoform-specific way by changing affinities of the Na+/K+-ATPase toward Na(+), K(+) or ATP. Post-translationally, O-glycosylated; required for stabilization and translocation to the plasma membrane.

The protein resides in the cell membrane. In terms of biological role, associates with and regulates the activity of the sodium/potassium-transporting ATPase (NKA) which catalyzes the hydrolysis of ATP coupled with the exchange of Na(+) and K(+) ions across the plasma membrane. Reduces the apparent affinity for external K(+), an effect that depends on the presence of external Na(+) and voltage. Increases the apparent affinity for intracellular Na(+). This Bos taurus (Bovine) protein is FXYD domain-containing ion transport regulator 7 (FXYD7).